The primary structure comprises 973 residues: ATP-dependent DNA helicase Q5 (973 aa).

A Helicase ATP-binding domain is found at 39-213; it reads MAVVKGDKDV…FAALHLKQPV (175 aa). Residue 52 to 59 coordinates ATP; it reads MPTGAGKS. The short motif at 157–160 is the DEAH box element; that stretch reads DEAH. The region spanning 241–398 is the Helicase C-terminal domain; sequence NLRDFCLKAL…NKPSDKATLL (158 aa). Positions 412, 428, 432, and 435 each coordinate Zn(2+). Serine 489 and serine 492 each carry phosphoserine. Positions 491-621 are interaction with POLR2A; the sequence is GSGDEGRDEA…ASKDGQLYDM (131 aa). 3 disordered regions span residues 518-538, 679-795, and 822-884; these read GKEA…LRDA, TEKL…VPGK, and CSLE…AREP. Threonine 527 carries the phosphothreonine modification. Residues 653–726 are interaction with RAD51; it reads PKRVGAGFSK…APGSRTNCGD (74 aa). Serine 728 bears the Phosphoserine; by CDK1 mark. Over residues 840 to 856 the composition is skewed to basic and acidic residues; sequence TQAEKRPRPQQESQEKR. Residues 863–878 show a composition bias toward polar residues; that stretch reads PSTNSSALASDPSTEN.

Belongs to the helicase family. RecQ subfamily. As to quaternary structure, monomer. Interacts with TOP2A, TOP3A and TOP3B. Interacts with RNA polymerase II subunit POLR2A. Identified in a complex with the RNA polymerase II core bound to DNA. Interacts with RAD51. Interacts with WRN; this interaction stimulates WRN helicase activity on DNA fork duplexes. Interacts with MUS1; this interaction promotes MUS81-dependent mitotic DNA synthesis. Zn(2+) serves as cofactor. Post-translationally, phosphorylated by CDK1 at Ser-728; this phosphorylation is required for RECQL5-mediated disruption of RAD51 filaments on stalled replication forks.

It localises to the nucleus. The protein localises to the nucleoplasm. The catalysed reaction is Couples ATP hydrolysis with the unwinding of duplex DNA by translocating in the 3'-5' direction.. It catalyses the reaction ATP + H2O = ADP + phosphate + H(+). Its function is as follows. DNA helicase that plays an important role in DNA replication, transcription and repair. Binds to the RNA polymerase II subunit POLR2A during transcription elongation and suppresses transcription-associated genomic instability. Also associates with POLR1A and enforces the stability of ribosomal DNA arrays. Plays an important role in mitotic chromosome separation after cross-over events and cell cycle progress. Mechanistically, removes RAD51 filaments protecting stalled replication forks at common fragile sites and stimulates MUS81-EME1 endonuclease leading to mitotic DNA synthesis. Required for efficient DNA repair, including repair of inter-strand cross-links. Stimulates DNA decatenation mediated by TOP2A. Prevents sister chromatid exchange and homologous recombination. The sequence is that of ATP-dependent DNA helicase Q5 (Recql5) from Rattus norvegicus (Rat).